The chain runs to 374 residues: Erythronate-4-phosphate dehydrogenase (374 aa).

Positions 45 and 67 each coordinate substrate. Aspartate 147 provides a ligand contact to NAD(+). The active site involves arginine 208. Residue aspartate 232 participates in NAD(+) binding. Residue glutamate 237 is part of the active site. The active-site Proton donor is the histidine 254. Residue glycine 257 coordinates NAD(+).

Belongs to the D-isomer specific 2-hydroxyacid dehydrogenase family. PdxB subfamily. As to quaternary structure, homodimer.

The protein localises to the cytoplasm. It catalyses the reaction 4-phospho-D-erythronate + NAD(+) = (R)-3-hydroxy-2-oxo-4-phosphooxybutanoate + NADH + H(+). Its pathway is cofactor biosynthesis; pyridoxine 5'-phosphate biosynthesis; pyridoxine 5'-phosphate from D-erythrose 4-phosphate: step 2/5. Functionally, catalyzes the oxidation of erythronate-4-phosphate to 3-hydroxy-2-oxo-4-phosphonooxybutanoate. The polypeptide is Erythronate-4-phosphate dehydrogenase (Pseudoalteromonas atlantica (strain T6c / ATCC BAA-1087)).